Here is a 200-residue protein sequence, read N- to C-terminus: Peptidyl-tRNA hydrolase (200 aa).

TRNA is bound at residue tyrosine 15. Histidine 20 acts as the Proton acceptor in catalysis. TRNA is bound by residues tyrosine 66, asparagine 68, and asparagine 114.

Belongs to the PTH family. Monomer.

The protein localises to the cytoplasm. It catalyses the reaction an N-acyl-L-alpha-aminoacyl-tRNA + H2O = an N-acyl-L-amino acid + a tRNA + H(+). In terms of biological role, hydrolyzes ribosome-free peptidyl-tRNAs (with 1 or more amino acids incorporated), which drop off the ribosome during protein synthesis, or as a result of ribosome stalling. Catalyzes the release of premature peptidyl moieties from peptidyl-tRNA molecules trapped in stalled 50S ribosomal subunits, and thus maintains levels of free tRNAs and 50S ribosomes. This Paraburkholderia phymatum (strain DSM 17167 / CIP 108236 / LMG 21445 / STM815) (Burkholderia phymatum) protein is Peptidyl-tRNA hydrolase.